The sequence spans 249 residues: NH(3)-dependent NAD(+) synthetase (249 aa).

Mg(2+) is bound at residue aspartate 34. Arginine 110 provides a ligand contact to deamido-NAD(+). Position 130 (threonine 130) interacts with ATP. Glutamate 135 serves as a coordination point for Mg(2+). Residues lysine 143 and aspartate 150 each contribute to the deamido-NAD(+) site. 2 residues coordinate ATP: lysine 159 and serine 181. 232-233 provides a ligand contact to deamido-NAD(+); sequence HK.

It belongs to the NAD synthetase family. As to quaternary structure, homodimer.

The catalysed reaction is deamido-NAD(+) + NH4(+) + ATP = AMP + diphosphate + NAD(+) + H(+). It participates in cofactor biosynthesis; NAD(+) biosynthesis; NAD(+) from deamido-NAD(+) (ammonia route): step 1/1. In terms of biological role, catalyzes the ATP-dependent amidation of deamido-NAD to form NAD. Uses ammonia as a nitrogen source. In Picrophilus torridus (strain ATCC 700027 / DSM 9790 / JCM 10055 / NBRC 100828 / KAW 2/3), this protein is NH(3)-dependent NAD(+) synthetase.